The sequence spans 1460 residues: MAEEQQQPPPQQPDAHQQLPPSAPNSGVALPALVPGLPGTEASALQHKIKNSICKTVQSKVDCILQEVEKFTDLEKLYLYLQLPSGLSNGEKSDQNAMSSSRAQQMHAFSWIRNTLEEHPETSLPKQEVYDEYKSYCDNLGYHPLSAADFGKIMKNVFPNMKARRLGTRGKSKYCYSGLRKKAFVHMPTLPNLDFHKTGDGLEGAEPSGQLQNIDEEVISSACRLVCEWAQKVLSQPFDTVLELARFLVKSHYIGTKSMAALTVMAAAPAGMKGITQPSAFIPTAESNSFQPQVKTLPSPIDAKQQLQRKIQKKQQEQKLQSPLPGESAAKKSESATSNGVTNLPNGNPSILSPQPIGIVVAAVPSPIPVQRTRQLVTSPSPMSSSDGKVLPLNVQVVTQHMQSVKQAPKTPQNVPASPGGDRSARHRYPQILPKPANTSALTIRSPTTVLFTSSPIKTAVVPASHMSSLNVVKMTTISLTPSNSNTPLKHSASVSSATGTTEESRSVPQIKNGSVVSLQSPGSRSSSAGGTSAVEVKVEPETSSDEHPVQCQENSDEAKAPQTPSALLGQKSNTDGALQKPSNEGVIEIKATKVCDQRTKCKSRCNEMLPGTSTGNNQSTITLSVASQNLTFTSSSSPPNGDSINKDPKLCTKSPRKRLSSTLQETQVPPVKKPIVEQLSAATIEGQKQGSVKKDQKVPHSGKTEGSTAGAQIPSKVSVNVSSHIGANQPLNSSALVISDSALEQQTTPSSSPDIKVKLEGSVFLLDSDSKSVGSFNPNGWQQITKDSEFISASCEQQQDISVMTIPEHSDINDLEKSVWELEGMPQDTYSQQLHSQIQESSLNQIQAHSSDQLPLQSELKEFEPSVSQTNESYFPFDDELTQDSIVEELVLMEQQMSMNNSHSYGNCLGMTLQSQSVTPGAPMSSHTSSTHFYHPIHSNGTPIHTPTPTPTPTPTPTPTPTPTSEMIAGSQSLSRESPCSRLAQTTPVDSALGSSRHTPIGTPHSNCSSSVPPSPVECRNPFAFTPISSSMAYHDASIVSSSPVKPMQRPMATHPDKTKLEWMNNGYSGVGNSSVSGHGILPSYQELVEDRFRKPHAFAVPGQSYQSQSRHHDTHFGRLTPVSPVQHQGATVNNTNKQEGFAVPAPLDNKGTNSSASSNFRCRSVSPAVHRQRNLSGSTLYPVSNIPRSNVTPFGSPVTPEVHVFTNVHTDACANNIAQRSQSVPLTVMMQTAFPNALQKQANSKKITNVLLSKLDSDNDDAVRGLGMNNLPSNYTARMNLTQILEPSTVFPSANPQNMIDSSTSVYEFQTPSYLTKSNSTGQINFSPGDNQAQSEIGEQQLDFNSTVKDLLSGDSLQTNQQLVGQGASDLTNTASDFSSDIRLSSELSGSINDLNTLDPNLLFDPGRQQGQDDEATLEELKNDPLFQQICSESMNSMTSSGFEWIESKDHPTVEMLG.

The tract at residues 1–34 is disordered; the sequence is MAEEQQQPPPQQPDAHQQLPPSAPNSGVALPALV. The RFX-type winged-helix DNA-binding region spans 108 to 183; it reads AFSWIRNTLE…YCYSGLRKKA (76 aa). The short motif at 188 to 193 is the PxLPxI/L motif; mediates interaction with ANKRA2 and RFXANK element; sequence PTLPNL. The interval 308 to 352 is disordered; sequence QRKIQKKQQEQKLQSPLPGESAAKKSESATSNGVTNLPNGNPSIL. Residue S322 is modified to Phosphoserine. A compositionally biased stretch (polar residues) spans 337–352; the sequence is TSNGVTNLPNGNPSIL. S379 carries the phosphoserine modification. Positions 404 to 416 are enriched in polar residues; it reads SVKQAPKTPQNVP. The segment at 404-428 is disordered; it reads SVKQAPKTPQNVPASPGGDRSARHR. Phosphoserine is present on residues S418 and S455. Residues 481-513 show a composition bias toward polar residues; sequence TPSNSNTPLKHSASVSSATGTTEESRSVPQIKN. 3 disordered regions span residues 481–585, 632–715, and 917–1015; these read TPSN…PSNE, TFTS…AQIP, and QSVT…SVPP. A compositionally biased stretch (low complexity) spans 515 to 535; it reads SVVSLQSPGSRSSSAGGTSAV. The segment covering 537–549 has biased composition (basic and acidic residues); the sequence is VKVEPETSSDEHP. 2 stretches are compositionally biased toward polar residues: residues 563-583 and 632-644; these read QTPS…QKPS and TFTS…NGDS. T564 is subject to Phosphothreonine. Position 662 is a phosphoserine (S662). K704 is modified (N6-acetyllysine). Composition is skewed to polar residues over residues 705 to 715 and 917 to 933; these read TEGSTAGAQIP and QSVT…SSTH. Residues 947 to 963 show a composition bias toward pro residues; it reads TPTPTPTPTPTPTPTPT. Residues 971-1009 are compositionally biased toward polar residues; the sequence is GSQSLSRESPCSRLAQTTPVDSALGSSRHTPIGTPHSNC. T988 carries the phosphothreonine modification. Residues S1178 and S1329 each carry the phosphoserine modification.

It belongs to the RFX family. In terms of assembly, interacts (via PxLPxI/L motif) with RFXANK (via ankyrin repeats). Interacts (via PxLPxI/L motif) with ANKRA2 (via ankyrin repeats). Widely expressed in many different tissue types including thymus and placenta, with high expression in brain. Expressed in both inhibitory and excitatory neurons in cortex.

The protein resides in the nucleus. Transcription factor. Acts as a transcriptional activator by binding to promoter regions of target genes, such as PDCD4, PIK3IP1, MXD4, PNRC1, and RFX5. Plays a role in natural killer (NK) cell maintenance and immunity. May play a role in the process of ciliogenesis in the neural tube and neural tube closure. The protein is DNA-binding protein RFX7 of Homo sapiens (Human).